Consider the following 288-residue polypeptide: 18S rRNA aminocarboxypropyltransferase (288 aa).

S-adenosyl-L-methionine is bound by residues Ser43, Val91, Leu114, and Trp129. Residues Ile209 to Leu221 show a composition bias toward polar residues. The segment at Ile209–Asn267 is disordered. A compositionally biased stretch (basic and acidic residues) spans Asn229 to Pro253.

This sequence belongs to the TDD superfamily. TSR3 family.

It is found in the cytoplasm. It localises to the nucleus. The enzyme catalyses an N(1)-methylpseudouridine in rRNA + S-adenosyl-L-methionine = N(1)-methyl-N(3)-[(3S)-3-amino-3-carboxypropyl]pseudouridine in rRNA + S-methyl-5'-thioadenosine + H(+). The catalysed reaction is N(1)-methylpseudouridine(1191) in yeast 18S rRNA + S-adenosyl-L-methionine = N(1)-methyl-N(3)-[(3S)-3-amino-3-carboxypropyl]pseudouridine(1191) in yeast 18S rRNA + S-methyl-5'-thioadenosine + H(+). Functionally, aminocarboxypropyltransferase that catalyzes the aminocarboxypropyl transfer on pseudouridine at position 1191 (Psi1191) in 18S rRNA. It constitutes the last step in biosynthesis of the hypermodified N1-methyl-N3-(3-amino-3-carboxypropyl) pseudouridine (m1acp3-Psi) conserved in eukaryotic 18S rRNA. Required for processing 35S pre-rRNA at site D. The sequence is that of 18S rRNA aminocarboxypropyltransferase from Schizosaccharomyces pombe (strain 972 / ATCC 24843) (Fission yeast).